A 148-amino-acid polypeptide reads, in one-letter code: Snaclec 4 (148 aa).

The first 23 residues, 1-23 (MGRFIFVSFSLLVVFFSLSGTEA), serve as a signal peptide directing secretion. One can recognise a C-type lectin domain in the interval 34–148 (YDQNCYKAFE…DTQFRLQEPG (115 aa)).

This sequence belongs to the snaclec family. As to quaternary structure, heterodimer; disulfide-linked. Post-translationally, contains disulfide bonds. In terms of tissue distribution, expressed by the venom gland.

It localises to the secreted. Interferes with one step of hemostasis (modulation of platelet aggregation, or coagulation cascade, for example). The chain is Snaclec 4 from Echis pyramidum leakeyi (Leakey's carpet viper).